Here is a 385-residue protein sequence, read N- to C-terminus: Putative 8-amino-7-oxononanoate synthase (385 aa).

Arginine 22 lines the substrate pocket. 109-110 (GY) is a pyridoxal 5'-phosphate binding site. Histidine 134 is a substrate binding site. Pyridoxal 5'-phosphate is bound by residues serine 182, 207–210 (DEAH), and 238–241 (TLSK). Lysine 241 carries the post-translational modification N6-(pyridoxal phosphate)lysine. Substrate is bound at residue threonine 353.

Belongs to the class-II pyridoxal-phosphate-dependent aminotransferase family. BioF subfamily. As to quaternary structure, homodimer. Pyridoxal 5'-phosphate is required as a cofactor.

It carries out the reaction 6-carboxyhexanoyl-[ACP] + L-alanine + H(+) = (8S)-8-amino-7-oxononanoate + holo-[ACP] + CO2. The protein operates within cofactor biosynthesis; biotin biosynthesis. Functionally, catalyzes the decarboxylative condensation of pimeloyl-[acyl-carrier protein] and L-alanine to produce 8-amino-7-oxononanoate (AON), [acyl-carrier protein], and carbon dioxide. The polypeptide is Putative 8-amino-7-oxononanoate synthase (bioF) (Microcystis aeruginosa (strain NIES-843 / IAM M-2473)).